The following is a 138-amino-acid chain: ATP synthase epsilon chain (138 aa).

It belongs to the ATPase epsilon chain family. As to quaternary structure, F-type ATPases have 2 components, CF(1) - the catalytic core - and CF(0) - the membrane proton channel. CF(1) has five subunits: alpha(3), beta(3), gamma(1), delta(1), epsilon(1). CF(0) has three main subunits: a, b and c.

Its subcellular location is the cell membrane. In terms of biological role, produces ATP from ADP in the presence of a proton gradient across the membrane. The protein is ATP synthase epsilon chain of Streptococcus gordonii (strain Challis / ATCC 35105 / BCRC 15272 / CH1 / DL1 / V288).